Reading from the N-terminus, the 366-residue chain is 3-dehydroquinate synthase (366 aa).

NAD(+)-binding positions include 75–80 (DGEQYK), 109–113 (GVIGD), 133–134 (TT), Lys146, Lys155, and 173–176 (CLST). Residues Glu188, His251, and His268 each coordinate Zn(2+).

The protein belongs to the sugar phosphate cyclases superfamily. Dehydroquinate synthase family. The cofactor is NAD(+). Co(2+) is required as a cofactor. It depends on Zn(2+) as a cofactor.

The protein resides in the cytoplasm. The catalysed reaction is 7-phospho-2-dehydro-3-deoxy-D-arabino-heptonate = 3-dehydroquinate + phosphate. It participates in metabolic intermediate biosynthesis; chorismate biosynthesis; chorismate from D-erythrose 4-phosphate and phosphoenolpyruvate: step 2/7. Functionally, catalyzes the conversion of 3-deoxy-D-arabino-heptulosonate 7-phosphate (DAHP) to dehydroquinate (DHQ). In Vibrio parahaemolyticus serotype O3:K6 (strain RIMD 2210633), this protein is 3-dehydroquinate synthase.